The primary structure comprises 398 residues: Transposase for insertion sequence element ISRM5 (398 aa).

This sequence belongs to the transposase mutator family.

Its function is as follows. Required for the transposition of the insertion element. This chain is Transposase for insertion sequence element ISRM5, found in Rhizobium meliloti (strain 1021) (Ensifer meliloti).